Reading from the N-terminus, the 541-residue chain is Malate synthase (541 aa).

Catalysis depends on R172, which acts as the Proton acceptor. The active-site Proton donor is the D452.

It belongs to the malate synthase family.

Its subcellular location is the cytoplasm. It carries out the reaction glyoxylate + acetyl-CoA + H2O = (S)-malate + CoA + H(+). It participates in carbohydrate metabolism; glyoxylate cycle; (S)-malate from isocitrate: step 2/2. This is Malate synthase (mls) from Myxococcus xanthus (strain DK1622).